Consider the following 353-residue polypeptide: Outer membrane protein P5 (353 aa).

Residues 1-21 form the signal peptide; the sequence is MKKTAIALVVAGLAAASVAQA. Beta stranded transmembrane passes span 27 to 37, 58 to 69, 77 to 85, 104 to 115, 120 to 128, 158 to 167, 172 to 179, and 205 to 213; these read TFYAGVKAGQA, SFTYGVFGGYQI, LAVELGYDD, HGAHLSLKGSYE, LDVYGKAGV, GLFAVGAEYA, LAVRLEYQ, and SINAGISYR. In terms of domain architecture, OmpA-like spans 227-353; it reads VVSKTFSLNS…RVEIAVNGTK (127 aa). Cys-326 and Cys-338 are joined by a disulfide.

The protein belongs to the outer membrane OOP (TC 1.B.6) superfamily. OmpA family. In terms of assembly, monomer and homodimer.

It localises to the cell outer membrane. In terms of biological role, with TolR probably plays a role in maintaining the position of the peptidoglycan cell wall in the periplasm. Acts as a porin with low permeability that allows slow penetration of small solutes; an internal gate slows down solute passage. In Haemophilus influenzae, this protein is Outer membrane protein P5.